A 2488-amino-acid chain; its full sequence is PKS-NRPS hybrid synthetase swnK (2488 aa).

An adenylation (A) domain region spans residues 33-422 (FEQVADRFPD…GRIDGVVKIR (390 aa)). The region spanning 523 to 598 (QPTSELEQRI…ALAAYLAGTG (76 aa)) is the Carrier 1 domain. Serine 558 bears the O-(pantetheine 4'-phosphoryl)serine mark. The Ketosynthase family 3 (KS3) domain occupies 616 to 1039 (HEDIAIVSMA…GTNAHVIVEE (424 aa)). Active-site for beta-ketoacyl synthase activity residues include cysteine 785, histidine 920, and histidine 960. A malonyl-CoA:ACP transacylase (MAT) domain region spans residues 1149–1471 (LFTGQGSQLP…SLSELHVRHV (323 aa)). Residues 1723 to 1901 (GAVLVTGGLG…ASSVAYGTWA (179 aa)) form a ketoreductase (KR) domain region. A Carrier 2 domain is found at 2002-2077 (SIVLHMVQAT…SLSEFLLCRL (76 aa)). Serine 2037 carries the post-translational modification O-(pantetheine 4'-phosphoryl)serine. The disordered stretch occupies residues 2084–2103 (STSSPSDTDGATPSTPTSAA). The interval 2136 to 2364 (VTGATGFVGT…VLPVDYLCGT (229 aa)) is thioester reductase (TE) domain.

This sequence in the N-terminal section; belongs to the NRP synthetase family.

It catalyses the reaction L-pipecolate + malonyl-CoA + 2 NADPH + 4 H(+) = (8aS)-octahydroindolizin-1-one + CO2 + 2 NADP(+) + CoA + 2 H2O. The enzyme catalyses L-pipecolate + malonyl-CoA + 3 NADPH + 5 H(+) = (1R,8aS)-octahydroindolizin-1-ol + CO2 + 3 NADP(+) + CoA + 2 H2O. The catalysed reaction is L-pipecolate + malonyl-CoA + 3 NADPH + 5 H(+) = (1S,8aS)-octahydroindolizin-1-ol + CO2 + 3 NADP(+) + CoA + 2 H2O. Its pathway is mycotoxin biosynthesis. Functionally, PKS-NRPS hybrid synthetase; part of the gene cluster that mediates the biosynthesis of swainsonine (SW), a cytotoxic fungal alkaloid and a potential cancer therapy drug. Swainsonine production occurs via a multibranched pathway and is dispensable for fungal colonization of plants and infection of insect hosts. The first step of swainsonine biosynthesis is the production of the precursor pipecolic acid (PA) via conversion of L-lysine (Lys) to 1-piperideine-6-carboxylate (P6C) by the aminotransferase swnA, the latter being further reduced to PA by the reductase swnR. PA can be converted from lysine by both the SW biosynthetic cluster and the unclustered genes such as lysine cyclodeaminase. The PKS-NRPS hybrid synthetase swnK uptakes and condensates PA and malonyl-CoA with and without skipping of the ketoreductase (KR) domain in order to produce 3 intermediates, 1-oxoindolizidine, (1S)-1-hydroxyindolizin, and (1R)-1-hydroxyindolizine; with the transisomer (1S)-1-hydroxyindolizin being predominant. The terminal thioester reductase (TE) domain of swnK is involved in reduction of the thioester bond to release the intermediate aldehydes. The oxidoreductase swnN could contribute to the reduction of 1-oxoindolizidine to (1S)-1-hydroxyindolizin and (1R)-1-hydroxyindolizine, contributing to the major route of SW production. The dioxygenase swnH2 would be responsible for the oxidization of (1R)-1-hydroxyindolizine into (1R,2S)-1,2-dihydroxyindolizine and of (1S)-1-hydroxyindolizin to yield both (1R,2S)-1,2-dihydroxyindolizine and (1S,2S)-1,2-dihydroxyindolizine. The dioxygenase swnH1 then performs the conversion of the 1,2-dihydroxyindolizine epimers to SW. In Metarhizium robertsii (strain ARSEF 23 / ATCC MYA-3075) (Metarhizium anisopliae (strain ARSEF 23)), this protein is PKS-NRPS hybrid synthetase swnK.